Reading from the N-terminus, the 119-residue chain is Gas vesicle protein O1 (119 aa).

Over residues 1–12 the composition is skewed to basic and acidic residues; the sequence is MADPANDRSERE. The tract at residues 1–48 is disordered; sequence MADPANDRSEREEGGEDDETPPASDGNPSPSANSFTLSNAQTRAREAA. Residues 26–42 are compositionally biased toward polar residues; that stretch reads GNPSPSANSFTLSNAQT.

The protein belongs to the gas vesicle GvpO family. As to quaternary structure, forms homodimers, forms a GvpN1-GvpO1 heterodimer, interacts with GvpC1 (via the latter's C-terminus), GvpF1, GvpI1 and GvpL1, might interact with GvpA1.

The protein localises to the gas vesicle. It localises to the cytoplasm. Its function is as follows. A minor component of the gas vesicle, also found in soluble extracts. May play a role in transcription and/or RNA stability and in GV assembly. Gas vesicles are hollow, gas filled proteinaceous nanostructures found in several microbial planktonic microorganisms. They allow positioning of halobacteria at the optimal depth for growth in the poorly aerated, shallow brine pools of their habitat. In terms of biological role, expression of a 9.5 kb p-vac DNA fragment containing 2 divergently transcribed regions (gvpD-gvpE-gvpF-gvpG-gvpH-gvpI-gvpJ-gvpK-gvpL-gvpM and gvpA-gvpC-gvpN-gvpO) allows H.volcanii to produce gas vesicles. A minimal gas vesicle can be made in H.volcanii by gvpA1-gvpO1 gvpF1-gvpG1-gvpJ1-gvpK1-gvpL1-gvpM1; lack of enough GvpJ1 prevents formation. The same region restores gas vesicle production in H.halobium without the p-vac locus, but it still has the c-vac locus. This is Gas vesicle protein O1 from Halobacterium salinarum (strain ATCC 700922 / JCM 11081 / NRC-1) (Halobacterium halobium).